A 479-amino-acid polypeptide reads, in one-letter code: Cyclin-dependent kinase F-1 (479 aa).

One can recognise a Protein kinase domain in the interval 21–418 (YEIFERVGSG…TMEMLNDKYL (398 aa)). Residues 27–35 (VGSGAYADV) and lysine 50 each bind ATP. Residue tyrosine 32 is modified to Phosphotyrosine. Residue aspartate 146 is the Proton acceptor of the active site. Phosphoserine is present on residues serine 179, serine 208, and serine 247. The segment at 187–221 (KLEDKDGETSEPPEVIPDYENSPRQGSDGQEREAM) is disordered. Phosphothreonine is present on threonine 290. Positions 434-479 (PTMSGPDEDSPRKWNDYREMDSDSDFDGFGPMNVKPTSSGFTIEFP) are disordered. The span at 442-454 (DSPRKWNDYREMD) shows a compositional bias: basic and acidic residues. Over residues 468–479 (KPTSSGFTIEFP) the composition is skewed to polar residues.

The protein belongs to the protein kinase superfamily. CMGC Ser/Thr protein kinase family. CDC2/CDKX subfamily. Highly expressed in suspension cell culture. Expressed at low levels in all plant organs.

The catalysed reaction is L-seryl-[protein] + ATP = O-phospho-L-seryl-[protein] + ADP + H(+). It carries out the reaction L-threonyl-[protein] + ATP = O-phospho-L-threonyl-[protein] + ADP + H(+). It catalyses the reaction [DNA-directed RNA polymerase] + ATP = phospho-[DNA-directed RNA polymerase] + ADP + H(+). Its function is as follows. CDK-activating kinase that modulates CDKD-2 and CDKD-3 activities by phosphorylation of the T-loop. Activates CDKD-2 C-terminal domain (CTD) kinase activity. Activates CDKA-1 probably by phosphorylation. Possesses a CDK kinase activity independently of association with cyclin CYCH1-1. Phosphorylates the CTD of the large subunit of RNA polymerase II. The chain is Cyclin-dependent kinase F-1 (CDKF-1) from Arabidopsis thaliana (Mouse-ear cress).